The chain runs to 360 residues: Chorismate synthase (360 aa).

2 residues coordinate NADP(+): Arg48 and Arg54. FMN contacts are provided by residues 125-127 (RSS), 242-243 (NG), Gly283, 298-302 (KPTSS), and Arg324.

The protein belongs to the chorismate synthase family. Homotetramer. FMNH2 serves as cofactor.

It catalyses the reaction 5-O-(1-carboxyvinyl)-3-phosphoshikimate = chorismate + phosphate. It participates in metabolic intermediate biosynthesis; chorismate biosynthesis; chorismate from D-erythrose 4-phosphate and phosphoenolpyruvate: step 7/7. In terms of biological role, catalyzes the anti-1,4-elimination of the C-3 phosphate and the C-6 proR hydrogen from 5-enolpyruvylshikimate-3-phosphate (EPSP) to yield chorismate, which is the branch point compound that serves as the starting substrate for the three terminal pathways of aromatic amino acid biosynthesis. This reaction introduces a second double bond into the aromatic ring system. The protein is Chorismate synthase of Gluconobacter oxydans (strain 621H) (Gluconobacter suboxydans).